The following is a 438-amino-acid chain: Tol-Pal system protein TolB (438 aa).

Positions 1 to 21 are cleaved as a signal peptide; the sequence is MVKRSLLVLALLICLPATLFA.

This sequence belongs to the TolB family. In terms of assembly, the Tol-Pal system is composed of five core proteins: the inner membrane proteins TolA, TolQ and TolR, the periplasmic protein TolB and the outer membrane protein Pal. They form a network linking the inner and outer membranes and the peptidoglycan layer.

It is found in the periplasm. Its function is as follows. Part of the Tol-Pal system, which plays a role in outer membrane invagination during cell division and is important for maintaining outer membrane integrity. The chain is Tol-Pal system protein TolB from Desulfosudis oleivorans (strain DSM 6200 / JCM 39069 / Hxd3) (Desulfococcus oleovorans).